Consider the following 356-residue polypeptide: Probable protein phosphatase 2C T23F11.1 (356 aa).

Residues 23 to 286 (LVGSSCMQGW…DNMTVVLVGL (264 aa)) enclose the PPM-type phosphatase domain. Mn(2+) contacts are provided by Asp-59, Gly-60, Asp-228, and Asp-277. The disordered stretch occupies residues 336 to 356 (NAANQEEEEDDNEPAPANFQV).

The protein belongs to the PP2C family. Mg(2+) serves as cofactor. Mn(2+) is required as a cofactor.

The enzyme catalyses O-phospho-L-seryl-[protein] + H2O = L-seryl-[protein] + phosphate. The catalysed reaction is O-phospho-L-threonyl-[protein] + H2O = L-threonyl-[protein] + phosphate. The polypeptide is Probable protein phosphatase 2C T23F11.1 (ppm-2) (Caenorhabditis elegans).